The chain runs to 418 residues: Creatine kinase U-type, mitochondrial (418 aa).

The transit peptide at M1–A39 directs the protein to the mitochondrion. The cardiolipin-binding stretch occupies residues A40–M64. The Phosphagen kinase N-terminal domain occupies R46 to N132. S152 carries the post-translational modification Phosphoserine. The region spanning Y159–L401 is the Phosphagen kinase C-terminal domain. S162–R166 lines the ATP pocket. Phosphoserine is present on S197. Residue T214 is modified to Phosphothreonine. Residue H225 participates in ATP binding. Residue S233 is modified to Phosphoserine. ATP is bound by residues R270, R326, R354 to V359, and D369. T356 is subject to Phosphothreonine.

It belongs to the ATP:guanido phosphotransferase family. Exists as an octamer composed of four MTCK homodimers. In many tissues, with highest levels in brain gut and kidney. In the kidney localized primarily in the outer medulla in the thick ascending limb and distal convoluted tubule.

It localises to the mitochondrion inner membrane. It catalyses the reaction creatine + ATP = N-phosphocreatine + ADP + H(+). Reversibly catalyzes the transfer of phosphate between ATP and various phosphogens (e.g. creatine phosphate). Creatine kinase isoenzymes play a central role in energy transduction in tissues with large, fluctuating energy demands, such as skeletal muscle, heart, brain and spermatozoa. The sequence is that of Creatine kinase U-type, mitochondrial (Ckmt1) from Rattus norvegicus (Rat).